A 208-amino-acid chain; its full sequence is MTIHYPNGNPYKDGTQFSSQAISRPTIYGGRGMTLEEELNISNQYYRSIDKAVVYKKPTPVQIVKVDYPKRSQAVIREAYFKTPSTTDYNGVYRGFYLDFEAKETKNKASFPLKNFHQHQIEHFRRCLKQSGICFVVIRFATLKRLFVFPAGRLIDCWDRQPDGGRKSIPLKDIVTNGFELHPQLQPVIPFLDGVDWLIETKVGNVRG.

The Mg(2+) site is built by T86, D88, E101, and Q120.

This sequence belongs to the RecU family. The cofactor is Mg(2+).

The protein resides in the cytoplasm. It catalyses the reaction Endonucleolytic cleavage at a junction such as a reciprocal single-stranded crossover between two homologous DNA duplexes (Holliday junction).. Endonuclease that resolves Holliday junction intermediates in genetic recombination. Cleaves mobile four-strand junctions by introducing symmetrical nicks in paired strands. Promotes annealing of linear ssDNA with homologous dsDNA. Required for DNA repair, homologous recombination and chromosome segregation. The chain is Holliday junction resolvase RecU from Lacticaseibacillus casei (strain BL23) (Lactobacillus casei).